The following is a 584-amino-acid chain: Dihydroxyacetone kinase 1 (584 aa).

An N-acetylserine modification is found at Ser-2. Ser-2 and Ser-5 each carry phosphoserine. One can recognise a DhaK domain in the interval 7-353 (EVTDPVNSSL…LNAFTNAPGW (347 aa)). Substrate is bound by residues 51 to 54 (GSGH), Lys-103, and Asp-108. Catalysis depends on His-220, which acts as the Tele-hemiaminal-histidine intermediate. The residue at position 365 (Ser-365) is a Phosphoserine. Residues 386–582 (DKFAEWMKSG…LCEFLKGVQS (197 aa)) form the DhaL domain. ATP is bound by residues 415–418 (DGDC) and 459–460 (TS). Position 512 is a phosphoserine (Ser-512). ATP contacts are provided by residues 514 to 515 (TM) and 567 to 569 (DPG).

It belongs to the dihydroxyacetone kinase (DAK) family.

The enzyme catalyses dihydroxyacetone + ATP = dihydroxyacetone phosphate + ADP + H(+). The catalysed reaction is D-glyceraldehyde + ATP = D-glyceraldehyde 3-phosphate + ADP + H(+). Its pathway is polyol metabolism; glycerol fermentation; glycerone phosphate from glycerol (oxidative route): step 2/2. In terms of biological role, catalyzes both the phosphorylation of dihydroxyacetone and of glyceraldehyde. The protein is Dihydroxyacetone kinase 1 (DAK1) of Saccharomyces cerevisiae (strain ATCC 204508 / S288c) (Baker's yeast).